A 188-amino-acid chain; its full sequence is Probable nicotinate-nucleotide adenylyltransferase (188 aa).

The protein belongs to the NadD family.

The enzyme catalyses nicotinate beta-D-ribonucleotide + ATP + H(+) = deamido-NAD(+) + diphosphate. It functions in the pathway cofactor biosynthesis; NAD(+) biosynthesis; deamido-NAD(+) from nicotinate D-ribonucleotide: step 1/1. Catalyzes the reversible adenylation of nicotinate mononucleotide (NaMN) to nicotinic acid adenine dinucleotide (NaAD). The polypeptide is Probable nicotinate-nucleotide adenylyltransferase (Salinispora arenicola (strain CNS-205)).